The chain runs to 872 residues: Alanine--tRNA ligase (872 aa).

Residues His563, His567, Cys665, and His669 each coordinate Zn(2+).

It belongs to the class-II aminoacyl-tRNA synthetase family. The cofactor is Zn(2+).

Its subcellular location is the cytoplasm. The catalysed reaction is tRNA(Ala) + L-alanine + ATP = L-alanyl-tRNA(Ala) + AMP + diphosphate. In terms of biological role, catalyzes the attachment of alanine to tRNA(Ala) in a two-step reaction: alanine is first activated by ATP to form Ala-AMP and then transferred to the acceptor end of tRNA(Ala). Also edits incorrectly charged Ser-tRNA(Ala) and Gly-tRNA(Ala) via its editing domain. The protein is Alanine--tRNA ligase of Bacteroides fragilis (strain YCH46).